We begin with the raw amino-acid sequence, 557 residues long: Formate--tetrahydrofolate ligase 2 (557 aa).

66 to 73 (TPAGEGKT) lines the ATP pocket.

This sequence belongs to the formate--tetrahydrofolate ligase family.

It carries out the reaction (6S)-5,6,7,8-tetrahydrofolate + formate + ATP = (6R)-10-formyltetrahydrofolate + ADP + phosphate. Its pathway is one-carbon metabolism; tetrahydrofolate interconversion. This chain is Formate--tetrahydrofolate ligase 2, found in Streptococcus pyogenes serotype M6 (strain ATCC BAA-946 / MGAS10394).